Consider the following 168-residue polypeptide: Vasopressin-neurophysin 2-copeptin (168 aa).

Positions 1 to 23 are cleaved as a signal peptide; sequence MLARMLNTTLSACFLSLLAFSSA. An intrachain disulfide couples cysteine 24 to cysteine 29. A Glycine amide modification is found at glycine 32. Intrachain disulfides connect cysteine 45/cysteine 89, cysteine 48/cysteine 62, cysteine 56/cysteine 79, cysteine 63/cysteine 69, cysteine 96/cysteine 108, cysteine 102/cysteine 120, and cysteine 109/cysteine 114. An N-linked (GlcNAc...) asparagine glycan is attached at asparagine 135.

It belongs to the vasopressin/oxytocin family. In terms of assembly, interacts with vasopressin receptors V1bR/AVPR1B (Ki=85 pM), V1aR/AVPR1A (Ki=0.6 nM) and V2R/AVPR2 (Ki=4.9 nM). Interacts with oxytocin receptor (OXTR) (Ki=110 nM).

It is found in the secreted. In terms of biological role, neurophysin 2 specifically binds vasopressin. Functionally, vasopressin has a direct antidiuretic action on the kidney, it also causes vasoconstriction of the peripheral vessels. Acts by binding to vasopressin receptors (V1bR/AVPR1B, V1aR/AVPR1A, and V2R/AVPR2). The protein is Vasopressin-neurophysin 2-copeptin (Avp) of Mus musculus (Mouse).